The primary structure comprises 433 residues: Histidine--tRNA ligase (433 aa).

It belongs to the class-II aminoacyl-tRNA synthetase family. As to quaternary structure, homodimer.

Its subcellular location is the cytoplasm. The catalysed reaction is tRNA(His) + L-histidine + ATP = L-histidyl-tRNA(His) + AMP + diphosphate + H(+). The chain is Histidine--tRNA ligase from Azoarcus sp. (strain BH72).